The chain runs to 429 residues: Saccharopine dehydrogenase-like oxidoreductase (429 aa).

At Ala2 the chain carries N-acetylalanine. Residues Ser209, Ser215, and Ser217 each carry the phosphoserine modification.

This sequence belongs to the saccharopine dehydrogenase family.

This chain is Saccharopine dehydrogenase-like oxidoreductase (Sccpdh), found in Rattus norvegicus (Rat).